We begin with the raw amino-acid sequence, 329 residues long: Ketol-acid reductoisomerase (NADP(+)) (329 aa).

The KARI N-terminal Rossmann domain occupies Thr2–Thr182. Residues Tyr25–Gln28, Ser51, Ser53, and Asp83–Gln86 each bind NADP(+). His108 is an active-site residue. NADP(+) is bound at residue Gly134. The region spanning Asn183–Leu328 is the KARI C-terminal knotted domain. Mg(2+) is bound by residues Asp191, Glu195, Glu227, and Glu231. Ser252 serves as a coordination point for substrate.

It belongs to the ketol-acid reductoisomerase family. The cofactor is Mg(2+).

It carries out the reaction (2R)-2,3-dihydroxy-3-methylbutanoate + NADP(+) = (2S)-2-acetolactate + NADPH + H(+). It catalyses the reaction (2R,3R)-2,3-dihydroxy-3-methylpentanoate + NADP(+) = (S)-2-ethyl-2-hydroxy-3-oxobutanoate + NADPH + H(+). It functions in the pathway amino-acid biosynthesis; L-isoleucine biosynthesis; L-isoleucine from 2-oxobutanoate: step 2/4. The protein operates within amino-acid biosynthesis; L-valine biosynthesis; L-valine from pyruvate: step 2/4. Involved in the biosynthesis of branched-chain amino acids (BCAA). Catalyzes an alkyl-migration followed by a ketol-acid reduction of (S)-2-acetolactate (S2AL) to yield (R)-2,3-dihydroxy-isovalerate. In the isomerase reaction, S2AL is rearranged via a Mg-dependent methyl migration to produce 3-hydroxy-3-methyl-2-ketobutyrate (HMKB). In the reductase reaction, this 2-ketoacid undergoes a metal-dependent reduction by NADPH to yield (R)-2,3-dihydroxy-isovalerate. This chain is Ketol-acid reductoisomerase (NADP(+)), found in Prochlorococcus marinus (strain MIT 9301).